The sequence spans 268 residues: Tryptophan synthase alpha chain (268 aa).

Active-site proton acceptor residues include E49 and D60.

The protein belongs to the TrpA family. In terms of assembly, tetramer of two alpha and two beta chains.

The enzyme catalyses (1S,2R)-1-C-(indol-3-yl)glycerol 3-phosphate + L-serine = D-glyceraldehyde 3-phosphate + L-tryptophan + H2O. The protein operates within amino-acid biosynthesis; L-tryptophan biosynthesis; L-tryptophan from chorismate: step 5/5. Functionally, the alpha subunit is responsible for the aldol cleavage of indoleglycerol phosphate to indole and glyceraldehyde 3-phosphate. The sequence is that of Tryptophan synthase alpha chain from Shigella boydii serotype 18 (strain CDC 3083-94 / BS512).